We begin with the raw amino-acid sequence, 366 residues long: Beta sliding clamp (366 aa).

This sequence belongs to the beta sliding clamp family. In terms of assembly, forms a ring-shaped head-to-tail homodimer around DNA which binds and tethers DNA polymerases and other proteins to the DNA. The DNA replisome complex has a single clamp-loading complex (3 tau and 1 each of delta, delta', psi and chi subunits) which binds 3 Pol III cores (1 core on the leading strand and 2 on the lagging strand) each with a beta sliding clamp dimer. Additional proteins in the replisome are other copies of gamma, psi and chi, Ssb, DNA helicase and RNA primase.

The protein localises to the cytoplasm. Functionally, confers DNA tethering and processivity to DNA polymerases and other proteins. Acts as a clamp, forming a ring around DNA (a reaction catalyzed by the clamp-loading complex) which diffuses in an ATP-independent manner freely and bidirectionally along dsDNA. Initially characterized for its ability to contact the catalytic subunit of DNA polymerase III (Pol III), a complex, multichain enzyme responsible for most of the replicative synthesis in bacteria; Pol III exhibits 3'-5' exonuclease proofreading activity. The beta chain is required for initiation of replication as well as for processivity of DNA replication. The polypeptide is Beta sliding clamp (dnaN) (Chlamydia pneumoniae (Chlamydophila pneumoniae)).